A 116-amino-acid polypeptide reads, in one-letter code: Large ribosomal subunit protein bL19 (116 aa).

It belongs to the bacterial ribosomal protein bL19 family.

Its function is as follows. This protein is located at the 30S-50S ribosomal subunit interface and may play a role in the structure and function of the aminoacyl-tRNA binding site. This Magnetococcus marinus (strain ATCC BAA-1437 / JCM 17883 / MC-1) protein is Large ribosomal subunit protein bL19.